We begin with the raw amino-acid sequence, 134 residues long: Large ribosomal subunit protein bL17 (134 aa).

It belongs to the bacterial ribosomal protein bL17 family. Part of the 50S ribosomal subunit. Contacts protein L32.

The protein is Large ribosomal subunit protein bL17 of Aromatoleum aromaticum (strain DSM 19018 / LMG 30748 / EbN1) (Azoarcus sp. (strain EbN1)).